The primary structure comprises 195 residues: Imidazoleglycerol-phosphate dehydratase (195 aa).

It belongs to the imidazoleglycerol-phosphate dehydratase family.

The protein resides in the cytoplasm. It catalyses the reaction D-erythro-1-(imidazol-4-yl)glycerol 3-phosphate = 3-(imidazol-4-yl)-2-oxopropyl phosphate + H2O. It participates in amino-acid biosynthesis; L-histidine biosynthesis; L-histidine from 5-phospho-alpha-D-ribose 1-diphosphate: step 6/9. This chain is Imidazoleglycerol-phosphate dehydratase, found in Geobacter sp. (strain M21).